A 594-amino-acid polypeptide reads, in one-letter code: MGKKSRVKTQKSGTGATATVSPKEILNLTSELLQKCSSPAPGPGKEWEEYVQIRTLVEKIRKKQKGLSVTFDGKREDYFPDLMKWASENGASVEGFEMVNFKEEGFGLRATRDIKAEELFLWVPRKLLMTVESAKNSVLGPLYSQDRILQAMGNIALAFHLLCERASPNSFWQPYIQTLPSEYDTPLYFEEDEVRYLQSTQAIHDVFSQYKNTARQYAYFYKVIQTHPHANKLPLKDSFTYEDYRWAVSSVMTRQNQIPTEDGSRVTLALIPLWDMCNHTNGLITTGYNLEDDRCECVALQDFRAGEQIYIFYGTRSNAEFVIHSGFFFDNNSHDRVKIKLGVSKSDRLYAMKAEVLARAGIPTSSVFALHFTEPPISAQLLAFLRVFCMTEEELKEHLLGDSAIDRIFTLGNSEFPVSWDNEVKLWTFLEDRASLLLKTYKTTIEEDKSVLKNHDLSVRAKMAIKLRLGEKEILEKAVKSAAVNREYYRQQMEEKAPLPKYEESNLGLLESSVGDSRLPLVLRNLEEEAGVQDALNIREAISKAKATENGLVNGENSIPNGTRSENESLNQESKRAVEDAKGSSSDSTAGVKE.

The interval 1–22 is disordered; that stretch reads MGKKSRVKTQKSGTGATATVSP. Residues 10-20 show a composition bias toward polar residues; it reads QKSGTGATATV. S-adenosyl-L-methionine is bound by residues Arg75, 104-106, Arg254, 275-279, and 325-327; these read EGF, DMCNH, and SGF. One can recognise an SET domain in the interval 94-314; sequence EGFEMVNFKE…AGEQIYIFYG (221 aa). At Ser513 the chain carries Phosphoserine. The tract at residues 549–594 is disordered; sequence ENGLVNGENSIPNGTRSENESLNQESKRAVEDAKGSSSDSTAGVKE. The span at 555 to 572 shows a compositional bias: polar residues; it reads GENSIPNGTRSENESLNQ. A compositionally biased stretch (basic and acidic residues) spans 573-582; it reads ESKRAVEDAK. The segment covering 583–594 has biased composition (polar residues); sequence GSSSDSTAGVKE.

The protein belongs to the class V-like SAM-binding methyltransferase superfamily. SETD3 actin-histidine methyltransferase family. In terms of assembly, interacts with MYOD1. Post-translationally, phosphorylated by GSK3B, which is required for recognition by the SCF(FBXW7) complex and subsequent degradation. Ubiquitinated by the SCF(FBXW7) complex following phosphorylation by GSK3B, leading to its degradation by the proteasome.

Its subcellular location is the cytoplasm. It localises to the nucleus. The catalysed reaction is L-histidyl-[protein] + S-adenosyl-L-methionine = N(tele)-methyl-L-histidyl-[protein] + S-adenosyl-L-homocysteine + H(+). In terms of biological role, protein-histidine N-methyltransferase that specifically mediates 3-methylhistidine (tele-methylhistidine) methylation of actin at 'His-73'. Histidine methylation of actin is required for smooth muscle contraction of the laboring uterus during delivery. Does not have protein-lysine N-methyltransferase activity and probably only catalyzes histidine methylation of actin. The polypeptide is Actin-histidine N-methyltransferase (Homo sapiens (Human)).